A 197-amino-acid polypeptide reads, in one-letter code: MARYIGPKTKIACRFGELIFGPDKAFSIRNSSSSRRKKKTSEYGIQLREKQKAKYIYGVLENQFRGFFEKASRSRGITGVVLLQLLESRLDNLVYRMGLAKTRAEARQLVSHKHITIDNNVVNIPSYLVKPGQIIGVRERAKSLEIILDNLIRANHNKYSWIEYDKSSMSARYLYIPERMDIPENIKEQLIVELYSK.

The region spanning 88 to 150 is the S4 RNA-binding domain; the sequence is SRLDNLVYRM…AKSLEIILDN (63 aa).

This sequence belongs to the universal ribosomal protein uS4 family. As to quaternary structure, part of the 30S ribosomal subunit. Contacts protein S5. The interaction surface between S4 and S5 is involved in control of translational fidelity.

One of the primary rRNA binding proteins, it binds directly to 16S rRNA where it nucleates assembly of the body of the 30S subunit. Its function is as follows. With S5 and S12 plays an important role in translational accuracy. The polypeptide is Small ribosomal subunit protein uS4 (Azobacteroides pseudotrichonymphae genomovar. CFP2).